We begin with the raw amino-acid sequence, 356 residues long: Peptide chain release factor 1 (356 aa).

Q233 carries the post-translational modification N5-methylglutamine.

Belongs to the prokaryotic/mitochondrial release factor family. In terms of processing, methylated by PrmC. Methylation increases the termination efficiency of RF1.

It is found in the cytoplasm. Its function is as follows. Peptide chain release factor 1 directs the termination of translation in response to the peptide chain termination codons UAG and UAA. The chain is Peptide chain release factor 1 from Endomicrobium trichonymphae.